We begin with the raw amino-acid sequence, 134 residues long: Profilin-1 (134 aa).

The cysteines at positions 13 and 118 are disulfide-linked. The Involved in PIP2 interaction motif lies at 84–100; it reads AVVRGKKGSGGITIKKT. Phosphothreonine is present on Thr-114.

The protein belongs to the profilin family. In terms of assembly, occurs in many kinds of cells as a complex with monomeric actin in a 1:1 ratio. In terms of processing, phosphorylated by MAP kinases.

The protein resides in the cytoplasm. It is found in the cytoskeleton. In terms of biological role, binds to actin and affects the structure of the cytoskeleton. At high concentrations, profilin prevents the polymerization of actin, whereas it enhances it at low concentrations. This chain is Profilin-1, found in Olea europaea (Common olive).